The primary structure comprises 427 residues: Putative B3 domain-containing protein Os04g0346900 (427 aa).

2 DNA-binding regions (TF-B3) span residues 25–118 and 140–236; these read LVPS…FDTT and KPQF…FGPN. The disordered stretch occupies residues 253-309; it reads TGEQQEAPSFSRRKCNNKKKSRFGEDDGNQQEMPCSRKGSGNKGRTSDRETKRMRKT. The span at 263 to 273 shows a compositional bias: basic residues; sequence SRRKCNNKKKS. Residues 320–427 constitute a DNA-binding region (TF-B3 3); it reads WIKKEINEYV…TLWRVDIERC (108 aa).

The protein localises to the nucleus. This Oryza sativa subsp. japonica (Rice) protein is Putative B3 domain-containing protein Os04g0346900.